A 273-amino-acid chain; its full sequence is Large ribosomal subunit protein uL2cz/uL2cy (273 aa).

Disordered regions lie at residues 1 to 25 (MAKH…VKSN) and 225 to 253 (PVDH…YPAL).

The protein belongs to the universal ribosomal protein uL2 family. As to quaternary structure, part of the 50S ribosomal subunit.

Its subcellular location is the plastid. It is found in the chloroplast. This Triticum aestivum (Wheat) protein is Large ribosomal subunit protein uL2cz/uL2cy (rpl2-A).